A 500-amino-acid polypeptide reads, in one-letter code: Proline/betaine transporter (500 aa).

At 1–37 the chain is on the cytoplasmic side; that stretch reads MLKRKKVKPITLRDVTIIDDGKLRKAITAASLGNAME. A helical transmembrane segment spans residues 38 to 58; the sequence is WFDFGVYGFVAYALGKVFFPG. Topologically, residues 59-65 are periplasmic; the sequence is ADPSVQM. Residues 66–86 traverse the membrane as a helical segment; it reads VAALATFSVPFLIRPLGGLFF. Over 87-97 the chain is Cytoplasmic; it reads GMLGDKYGRQK. A helical transmembrane segment spans residues 98–118; the sequence is ILAITIVIMSISTFCIGLIPS. Residues 119–121 are Periplasmic-facing; sequence YDT. The chain crosses the membrane as a helical span at residues 122-142; sequence IGIWAPILLLICKMAQGFSVG. Residues 143–169 lie on the Cytoplasmic side of the membrane; sequence GEYTGASIFVAEYSPDRKRGFMGSWLD. A helical membrane pass occupies residues 170-190; it reads FGSIAGFVLGAGVVVLISTIV. The Periplasmic segment spans residues 191-194; that stretch reads GEAN. The chain crosses the membrane as a helical span at residues 195–215; it reads FLDWGWRIPFFIALPLGIIGL. The Cytoplasmic portion of the chain corresponds to 216-260; that stretch reads YLRHALEETPAFQQHVDKLEQGDREGLQDGPKVSFKEIATKYWRS. The helical transmembrane segment at 261 to 281 threads the bilayer; it reads LLTCIGLVIATNVTYYMLLTY. At 282–297 the chain is on the periplasmic side; that stretch reads MPSYLSHNLHYSEDHG. The chain crosses the membrane as a helical span at residues 298–318; it reads VLIIIAIMIGMLFVQPVMGLL. The Cytoplasmic portion of the chain corresponds to 319 to 325; sequence SDRFGRR. A helical membrane pass occupies residues 326–346; the sequence is PFVLLGSVALFVLAIPAFILI. At 347–350 the chain is on the periplasmic side; the sequence is NSNV. A helical membrane pass occupies residues 351-371; sequence IGLIFAGLLMLAVILNCFTGV. The Cytoplasmic portion of the chain corresponds to 372–390; sequence MASTLPAMFPTHIRYSALA. Residues 391–411 traverse the membrane as a helical segment; that stretch reads AAFNISVLVAGLTPTLAAWLV. Residues 412-416 are Periplasmic-facing; sequence ESSQN. The chain crosses the membrane as a helical span at residues 417–437; the sequence is LMMPAYYLMVVAVVGLITGVT. At 438 to 500 the chain is on the cytoplasmic side; sequence MKETANRPLK…LVQQHPRIDE (63 aa). Residues 453 to 498 are a coiled coil; it reads ASDIQEAKEILVEHYDNIEQKIDDIDHEIADLQAKRTRLVQQHPRI.

Belongs to the major facilitator superfamily. Metabolite:H+ Symporter (MHS) family (TC 2.A.1.6) family.

It is found in the cell inner membrane. Functionally, proton symporter that senses osmotic shifts and responds by importing osmolytes such as proline, glycine betaine, stachydrine, pipecolic acid, ectoine and taurine. It is both an osmosensor and an osmoregulator which is available to participate early in the bacterial osmoregulatory response. This is Proline/betaine transporter (proP) from Escherichia coli O157:H7.